The sequence spans 703 residues: Fanconi anemia group B protein homolog (703 aa).

As to quaternary structure, belongs to the multisubunit FA complex composed of FANCA, FANCB, FANCC, FANCE, FANCF, FANCG, FANCL/PHF9 and FANCM.

Its subcellular location is the nucleus. DNA repair protein required for FANCD2 ubiquitination. The sequence is that of Fanconi anemia group B protein homolog (Fancb) from Mus musculus (Mouse).